We begin with the raw amino-acid sequence, 257 residues long: Pyridoxine/pyridoxamine 5'-phosphate oxidase (257 aa).

33-36 (RIKY) is a binding site for substrate. Residue 90–93 (RFVL) participates in FMN binding. Lys95 is a pyridoxal 5'-phosphate binding site. Residues 105–106 (YT) and Lys112 each bind FMN. The pyridoxal 5'-phosphate site is built by Tyr152, Arg156, and Ser160. FMN contacts are provided by residues 169 to 170 (QS) and Trp216. Residue 222–224 (RLH) coordinates substrate. Arg226 is a binding site for FMN.

Belongs to the pyridoxamine 5'-phosphate oxidase family. As to quaternary structure, homodimer. FMN serves as cofactor. Expressed in silk gland and fat body of the larva.

The catalysed reaction is pyridoxamine 5'-phosphate + O2 + H2O = pyridoxal 5'-phosphate + H2O2 + NH4(+). It carries out the reaction pyridoxine 5'-phosphate + O2 = pyridoxal 5'-phosphate + H2O2. It participates in cofactor metabolism; pyridoxal 5'-phosphate salvage; pyridoxal 5'-phosphate from pyridoxamine 5'-phosphate: step 1/1. It functions in the pathway cofactor metabolism; pyridoxal 5'-phosphate salvage; pyridoxal 5'-phosphate from pyridoxine 5'-phosphate: step 1/1. Catalyzes the oxidation of either pyridoxine 5'-phosphate (PNP) or pyridoxamine 5'-phosphate (PMP) into pyridoxal 5'-phosphate (PLP). The sequence is that of Pyridoxine/pyridoxamine 5'-phosphate oxidase from Bombyx mori (Silk moth).